We begin with the raw amino-acid sequence, 158 residues long: SsrA-binding protein (158 aa).

This sequence belongs to the SmpB family.

The protein resides in the cytoplasm. Required for rescue of stalled ribosomes mediated by trans-translation. Binds to transfer-messenger RNA (tmRNA), required for stable association of tmRNA with ribosomes. tmRNA and SmpB together mimic tRNA shape, replacing the anticodon stem-loop with SmpB. tmRNA is encoded by the ssrA gene; the 2 termini fold to resemble tRNA(Ala) and it encodes a 'tag peptide', a short internal open reading frame. During trans-translation Ala-aminoacylated tmRNA acts like a tRNA, entering the A-site of stalled ribosomes, displacing the stalled mRNA. The ribosome then switches to translate the ORF on the tmRNA; the nascent peptide is terminated with the 'tag peptide' encoded by the tmRNA and targeted for degradation. The ribosome is freed to recommence translation, which seems to be the essential function of trans-translation. In Bartonella quintana (strain Toulouse) (Rochalimaea quintana), this protein is SsrA-binding protein.